The primary structure comprises 315 residues: Tetraacyldisaccharide 4'-kinase (315 aa).

45–52 lines the ATP pocket; the sequence is SVGGSGKT.

It belongs to the LpxK family.

It catalyses the reaction a lipid A disaccharide + ATP = a lipid IVA + ADP + H(+). It functions in the pathway glycolipid biosynthesis; lipid IV(A) biosynthesis; lipid IV(A) from (3R)-3-hydroxytetradecanoyl-[acyl-carrier-protein] and UDP-N-acetyl-alpha-D-glucosamine: step 6/6. Its function is as follows. Transfers the gamma-phosphate of ATP to the 4'-position of a tetraacyldisaccharide 1-phosphate intermediate (termed DS-1-P) to form tetraacyldisaccharide 1,4'-bis-phosphate (lipid IVA). In Aquifex aeolicus (strain VF5), this protein is Tetraacyldisaccharide 4'-kinase.